A 182-amino-acid polypeptide reads, in one-letter code: Troponin I, fast skeletal muscle (182 aa).

Position 2 is an N-acetylglycine (G2). Residues 2–48 (GDEEKRNRAITARRQHLKSVMLQIAATELEKEESRRESEKENYLSEH) form an involved in binding TNC region. At T12 the chain carries Phosphothreonine. Basic and acidic residues predominate over residues 29–45 (ELEKEESRRESEKENYL). The segment at 29 to 53 (ELEKEESRRESEKENYLSEHCPPLH) is disordered. The tract at residues 97-117 (NQKLFDLRGKFKRPPLRRVRM) is involved in binding TNC and actin. S118 bears the Phosphoserine mark.

Belongs to the troponin I family. As to quaternary structure, binds to actin and tropomyosin.

Functionally, troponin I is the inhibitory subunit of troponin, the thin filament regulatory complex which confers calcium-sensitivity to striated muscle actomyosin ATPase activity. The polypeptide is Troponin I, fast skeletal muscle (Tnni2) (Mus musculus (Mouse)).